A 138-amino-acid chain; its full sequence is Small ribosomal subunit protein uS11c (138 aa).

Residues 1–21 are disordered; it reads MTKSIPRIGSRRGGRIASRKN. Positions 9-21 are enriched in basic residues; sequence GSRRGGRIASRKN.

It belongs to the universal ribosomal protein uS11 family. In terms of assembly, part of the 30S ribosomal subunit.

Its subcellular location is the plastid. It is found in the chloroplast. The protein is Small ribosomal subunit protein uS11c of Calycanthus floridus var. glaucus (Eastern sweetshrub).